The chain runs to 387 residues: Chorismate synthase (387 aa).

NADP(+)-binding residues include Arg39 and Arg45. A disordered region spans residues 92-113 (PVEEGSEEKRRVSRPRPGHADL). Residues 130 to 132 (RSS), 250 to 251 (QA), Gly295, 310 to 314 (KPIPT), and Arg336 each bind FMN.

It belongs to the chorismate synthase family. In terms of assembly, homotetramer. It depends on FMNH2 as a cofactor.

It carries out the reaction 5-O-(1-carboxyvinyl)-3-phosphoshikimate = chorismate + phosphate. The protein operates within metabolic intermediate biosynthesis; chorismate biosynthesis; chorismate from D-erythrose 4-phosphate and phosphoenolpyruvate: step 7/7. Catalyzes the anti-1,4-elimination of the C-3 phosphate and the C-6 proR hydrogen from 5-enolpyruvylshikimate-3-phosphate (EPSP) to yield chorismate, which is the branch point compound that serves as the starting substrate for the three terminal pathways of aromatic amino acid biosynthesis. This reaction introduces a second double bond into the aromatic ring system. In Brevibacillus brevis (strain 47 / JCM 6285 / NBRC 100599), this protein is Chorismate synthase.